A 207-amino-acid chain; its full sequence is Large ribosomal subunit protein uL4 (207 aa).

Residues 53–76 (NRSAVRGGGRKPWRQKGTGRARQG) are disordered. Over residues 60-71 (GGRKPWRQKGTG) the composition is skewed to basic residues.

This sequence belongs to the universal ribosomal protein uL4 family. As to quaternary structure, part of the 50S ribosomal subunit.

Its function is as follows. One of the primary rRNA binding proteins, this protein initially binds near the 5'-end of the 23S rRNA. It is important during the early stages of 50S assembly. It makes multiple contacts with different domains of the 23S rRNA in the assembled 50S subunit and ribosome. Functionally, forms part of the polypeptide exit tunnel. In Staphylococcus saprophyticus subsp. saprophyticus (strain ATCC 15305 / DSM 20229 / NCIMB 8711 / NCTC 7292 / S-41), this protein is Large ribosomal subunit protein uL4.